A 67-amino-acid polypeptide reads, in one-letter code: Probable Sec-independent protein translocase protein TatE (67 aa).

The chain crosses the membrane as a helical span at residues 4–21; that stretch reads ISITKLLVIAALVVLLFG. The segment at 44 to 67 is disordered; that stretch reads NDDDTGAKTPAASEAPAERLSHKE.

Belongs to the TatA/E family. TatE subfamily.

The protein localises to the cell inner membrane. In terms of biological role, part of the twin-arginine translocation (Tat) system that transports large folded proteins containing a characteristic twin-arginine motif in their signal peptide across membranes. TatE shares overlapping functions with TatA. This chain is Probable Sec-independent protein translocase protein TatE, found in Cronobacter sakazakii (strain ATCC BAA-894) (Enterobacter sakazakii).